An 85-amino-acid polypeptide reads, in one-letter code: Putative membrane protein insertion efficiency factor (85 aa).

The protein belongs to the UPF0161 family.

It localises to the cell inner membrane. In terms of biological role, could be involved in insertion of integral membrane proteins into the membrane. This Shewanella sediminis (strain HAW-EB3) protein is Putative membrane protein insertion efficiency factor.